We begin with the raw amino-acid sequence, 178 residues long: uncharacterized protein (178 aa).

This is an uncharacterized protein from Saccharomyces cerevisiae (strain ATCC 204508 / S288c) (Baker's yeast).